The primary structure comprises 365 residues: Peptide chain release factor 2 (365 aa).

Q251 bears the N5-methylglutamine mark.

Belongs to the prokaryotic/mitochondrial release factor family. Methylated by PrmC. Methylation increases the termination efficiency of RF2.

The protein resides in the cytoplasm. Its function is as follows. Peptide chain release factor 2 directs the termination of translation in response to the peptide chain termination codons UGA and UAA. In Sulfurimonas denitrificans (strain ATCC 33889 / DSM 1251) (Thiomicrospira denitrificans (strain ATCC 33889 / DSM 1251)), this protein is Peptide chain release factor 2.